Here is a 308-residue protein sequence, read N- to C-terminus: Aspartate carbamoyltransferase catalytic subunit (308 aa).

Carbamoyl phosphate-binding residues include Arg-58 and Thr-59. Lys-86 serves as a coordination point for L-aspartate. Carbamoyl phosphate-binding residues include Arg-108, His-136, and Gln-139. Residues Arg-169 and Arg-222 each coordinate L-aspartate. Carbamoyl phosphate-binding residues include Gly-264 and Pro-265.

Belongs to the aspartate/ornithine carbamoyltransferase superfamily. ATCase family. Heterododecamer (2C3:3R2) of six catalytic PyrB chains organized as two trimers (C3), and six regulatory PyrI chains organized as three dimers (R2).

It catalyses the reaction carbamoyl phosphate + L-aspartate = N-carbamoyl-L-aspartate + phosphate + H(+). The protein operates within pyrimidine metabolism; UMP biosynthesis via de novo pathway; (S)-dihydroorotate from bicarbonate: step 2/3. Its function is as follows. Catalyzes the condensation of carbamoyl phosphate and aspartate to form carbamoyl aspartate and inorganic phosphate, the committed step in the de novo pyrimidine nucleotide biosynthesis pathway. The sequence is that of Aspartate carbamoyltransferase catalytic subunit from Campylobacter hominis (strain ATCC BAA-381 / DSM 21671 / CCUG 45161 / LMG 19568 / NCTC 13146 / CH001A).